Reading from the N-terminus, the 471-residue chain is UDP-N-acetylmuramate--L-alanine ligase (471 aa).

Residue 112–118 (GTHGKTT) participates in ATP binding.

It belongs to the MurCDEF family.

It is found in the cytoplasm. It catalyses the reaction UDP-N-acetyl-alpha-D-muramate + L-alanine + ATP = UDP-N-acetyl-alpha-D-muramoyl-L-alanine + ADP + phosphate + H(+). It participates in cell wall biogenesis; peptidoglycan biosynthesis. In terms of biological role, cell wall formation. This is UDP-N-acetylmuramate--L-alanine ligase from Aromatoleum aromaticum (strain DSM 19018 / LMG 30748 / EbN1) (Azoarcus sp. (strain EbN1)).